We begin with the raw amino-acid sequence, 139 residues long: Small ribosomal subunit protein bS16 (139 aa).

The segment at 85–108 is disordered; that stretch reads ESKSGKKPAKKATTKEASAKKPTD. Positions 97 to 108 are enriched in basic and acidic residues; sequence TTKEASAKKPTD.

Belongs to the bacterial ribosomal protein bS16 family.

In Leuconostoc mesenteroides subsp. mesenteroides (strain ATCC 8293 / DSM 20343 / BCRC 11652 / CCM 1803 / JCM 6124 / NCDO 523 / NBRC 100496 / NCIMB 8023 / NCTC 12954 / NRRL B-1118 / 37Y), this protein is Small ribosomal subunit protein bS16.